A 589-amino-acid polypeptide reads, in one-letter code: Alpha-1,2-mannosyltransferase MNN22 (589 aa).

The Cytoplasmic segment spans residues 1–16; sequence MGSIFKDGRRILVRPK. Residues 17 to 33 form a helical membrane-spanning segment; the sequence is SLIICLCLISIIFTQLI. Over 34 to 589 the chain is Extracellular; that stretch reads RYQYQLIADE…NTIAWLGKKT (556 aa). The interval 50–77 is disordered; it reads EDHSSSQSLKNTKLNSTRSSSPISPPKS. Residues 54 to 71 show a composition bias toward polar residues; it reads SSQSLKNTKLNSTRSSSP. 3 N-linked (GlcNAc...) asparagine glycosylation sites follow: Asn64, Asn332, and Asn530.

Belongs to the MNN1/MNT family.

It localises to the golgi apparatus membrane. The protein operates within protein modification; protein glycosylation. In terms of biological role, alpha-1,2-mannosyltransferase required for cell wall integrity. Responsible for addition of the first alpha-1,2-linked mannose to form the branches on the mannan backbone of oligosaccharides. Addition of alpha-1,2-mannose is required for stabilization of the alpha-1,6-mannose backbone and hence regulates mannan fibril length; and is important for both immune recognition and virulence. In Candida albicans (strain SC5314 / ATCC MYA-2876) (Yeast), this protein is Alpha-1,2-mannosyltransferase MNN22 (MNN22).